We begin with the raw amino-acid sequence, 527 residues long: Transcription factor bHLH157 (527 aa).

Disordered regions lie at residues 295-318 and 335-368; these read SGVN…LFPQ and SSIG…KDRQ. The span at 307–318 shows a compositional bias: polar residues; that stretch reads TSSAHSSSLFPQ. A Nuclear localization signal motif is present at residues 341–348; sequence WKKPHEEG. Residues 343 to 368 are compositionally biased toward basic and acidic residues; the sequence is KPHEEGVKKKRAKAGESRRPRPKDRQ. In terms of domain architecture, bHLH spans 354 to 403; that stretch reads AKAGESRRPRPKDRQMIQDRIKELRGMIPNGAKCSIDTLLDLTIKHMVFM.

This sequence belongs to the bHLH protein family. LHW subfamily. As to quaternary structure, homodimer.

The protein localises to the nucleus. Its function is as follows. Transcription factor that may regulate root development. The sequence is that of Transcription factor bHLH157 (BHLH157) from Arabidopsis thaliana (Mouse-ear cress).